Here is a 520-residue protein sequence, read N- to C-terminus: 3-phosphoshikimate 1-carboxyvinyltransferase, chloroplastic (520 aa).

The transit peptide at 1–76 (MAQVSRICNG…KVMSSVSTAE (76 aa)) directs the protein to the chloroplast. Residues 20-39 (LSKSSQRKSPLSVSLKTQQH) are disordered. Residues Lys99, Ser100, and Arg104 each contribute to the 3-phosphoshikimate site. Phosphoenolpyruvate is bound at residue Lys99. Residues Gly177 and Arg207 each contribute to the phosphoenolpyruvate site. The 3-phosphoshikimate site is built by Ser254, Ser255, Gln256, Ser282, Asp407, and Lys434. Gln256 provides a ligand contact to phosphoenolpyruvate. The Proton acceptor role is filled by Asp407. 3 residues coordinate phosphoenolpyruvate: Arg438, Arg480, and Lys505.

It belongs to the EPSP synthase family.

Its subcellular location is the plastid. The protein localises to the chloroplast. The enzyme catalyses 3-phosphoshikimate + phosphoenolpyruvate = 5-O-(1-carboxyvinyl)-3-phosphoshikimate + phosphate. The protein operates within metabolic intermediate biosynthesis; chorismate biosynthesis; chorismate from D-erythrose 4-phosphate and phosphoenolpyruvate: step 6/7. Its function is as follows. Catalyzes the transfer of the enolpyruvyl moiety of phosphoenolpyruvate (PEP) to the 5-hydroxyl of shikimate-3-phosphate (S3P) to produce enolpyruvyl shikimate-3-phosphate and inorganic phosphate. The polypeptide is 3-phosphoshikimate 1-carboxyvinyltransferase, chloroplastic (Arabidopsis thaliana (Mouse-ear cress)).